The sequence spans 211 residues: Thymidylate kinase (211 aa).

Glycine 11 to threonine 18 is an ATP binding site.

The protein belongs to the thymidylate kinase family.

The catalysed reaction is dTMP + ATP = dTDP + ADP. Functionally, phosphorylation of dTMP to form dTDP in both de novo and salvage pathways of dTTP synthesis. In Streptococcus equi subsp. zooepidemicus (strain H70), this protein is Thymidylate kinase.